The primary structure comprises 447 residues: uncharacterized protein (447 aa).

3 helical membrane-spanning segments follow: residues 28–48 (IVIVSATYSISLDSTVLYPAV), 241–261 (IDASFTSIFYSVFMLSIYYAI), and 397–417 (PFVLNVITVADGPCSFSLSIF).

It is found in the membrane. This is an uncharacterized protein from Schizosaccharomyces pombe (strain 972 / ATCC 24843) (Fission yeast).